Reading from the N-terminus, the 204-residue chain is Putative AgrB-like protein (204 aa).

4 helical membrane-spanning segments follow: residues 40–60, 87–107, 111–131, and 156–176; these read IILINVMKFAIVYGISLATGL, LNCTLISLAMFVLAPFVFQNI, NWIVLGTFAFILLNMFLFAPA, and LILTGIALLIPFAEMKTLIMV.

The protein belongs to the AgrB family.

Its subcellular location is the cell membrane. In terms of biological role, may be involved in the proteolytic processing of a quorum sensing system signal molecule precursor. This chain is Putative AgrB-like protein, found in Listeria welshimeri serovar 6b (strain ATCC 35897 / DSM 20650 / CCUG 15529 / CIP 8149 / NCTC 11857 / SLCC 5334 / V8).